The primary structure comprises 468 residues: Hydroxymethylglutaryl-CoA lyase, mitochondrial (468 aa).

Residues 168–435 (VKIVEVGPRD…HTNVDLGKLI (268 aa)) form the Pyruvate carboxyltransferase domain. Arg-176 contacts substrate. Residues Asp-177, His-368, and His-370 each coordinate a divalent metal cation. Residue Cys-401 is part of the active site. An a divalent metal cation-binding site is contributed by Asn-410.

It belongs to the HMG-CoA lyase family. As to quaternary structure, homodimer. A divalent metal cation serves as cofactor.

It is found in the mitochondrion matrix. The enzyme catalyses (3S)-3-hydroxy-3-methylglutaryl-CoA = acetoacetate + acetyl-CoA. Its pathway is metabolic intermediate metabolism; (S)-3-hydroxy-3-methylglutaryl-CoA degradation; acetoacetate from (S)-3-hydroxy-3-methylglutaryl-CoA: step 1/1. Its function is as follows. Involved in the catabolism of branched amino acids such as leucine. The chain is Hydroxymethylglutaryl-CoA lyase, mitochondrial (HMGCL) from Arabidopsis thaliana (Mouse-ear cress).